Consider the following 132-residue polypeptide: Ribosome-binding factor A (132 aa).

The protein belongs to the RbfA family. Monomer. Binds 30S ribosomal subunits, but not 50S ribosomal subunits or 70S ribosomes.

It localises to the cytoplasm. Its function is as follows. One of several proteins that assist in the late maturation steps of the functional core of the 30S ribosomal subunit. Associates with free 30S ribosomal subunits (but not with 30S subunits that are part of 70S ribosomes or polysomes). Required for efficient processing of 16S rRNA. May interact with the 5'-terminal helix region of 16S rRNA. The chain is Ribosome-binding factor A from Pseudomonas putida (strain ATCC 700007 / DSM 6899 / JCM 31910 / BCRC 17059 / LMG 24140 / F1).